The chain runs to 202 residues: LexA repressor (202 aa).

A DNA-binding region (H-T-H motif) is located at residues 28–48 (RAEIAQRLGFRSPNAAEEHLK). Catalysis depends on for autocatalytic cleavage activity residues Ser-119 and Lys-156.

Belongs to the peptidase S24 family. In terms of assembly, homodimer.

The enzyme catalyses Hydrolysis of Ala-|-Gly bond in repressor LexA.. Functionally, represses a number of genes involved in the response to DNA damage (SOS response), including recA and lexA. Binds to the 16 bp palindromic sequence 5'-CTGTATATATATACAG-3'. In the presence of single-stranded DNA, RecA interacts with LexA causing an autocatalytic cleavage which disrupts the DNA-binding part of LexA, leading to derepression of the SOS regulon and eventually DNA repair. The chain is LexA repressor from Salmonella agona (strain SL483).